The primary structure comprises 379 residues: Cytochrome b (379 aa).

The next 4 helical transmembrane spans lie at Leu33–Met53, Trp77–Ile98, Trp113–Leu133, and Phe178–Leu198. Residues His83 and His97 each coordinate heme b. The heme b site is built by His182 and His196. An a ubiquinone-binding site is contributed by His201. A run of 4 helical transmembrane segments spans residues Ile226 to His246, Leu288 to His308, Ile320 to Gly340, and Phe347 to Pro367.

This sequence belongs to the cytochrome b family. In terms of assembly, the cytochrome bc1 complex contains 11 subunits: 3 respiratory subunits (MT-CYB, CYC1 and UQCRFS1), 2 core proteins (UQCRC1 and UQCRC2) and 6 low-molecular weight proteins (UQCRH/QCR6, UQCRB/QCR7, UQCRQ/QCR8, UQCR10/QCR9, UQCR11/QCR10 and a cleavage product of UQCRFS1). This cytochrome bc1 complex then forms a dimer. The cofactor is heme b.

It is found in the mitochondrion inner membrane. Functionally, component of the ubiquinol-cytochrome c reductase complex (complex III or cytochrome b-c1 complex) that is part of the mitochondrial respiratory chain. The b-c1 complex mediates electron transfer from ubiquinol to cytochrome c. Contributes to the generation of a proton gradient across the mitochondrial membrane that is then used for ATP synthesis. The chain is Cytochrome b (MT-CYB) from Bradypus tridactylus (Pale-throated three-toed sloth).